The sequence spans 336 residues: Isopentenyl-diphosphate delta-isomerase (336 aa).

Residue 5 to 6 (RK) coordinates substrate. FMN contacts are provided by residues 60–62 (AMT), serine 90, and asparagine 117. Residue glutamine 147 participates in substrate binding. Position 148 (glutamate 148) interacts with Mg(2+). FMN is bound by residues lysine 179, serine 204, threonine 209, 253–255 (GVR), and 274–275 (SR).

This sequence belongs to the IPP isomerase type 2 family. Homooctamer. Dimer of tetramers. FMN is required as a cofactor. Requires NADPH as cofactor. Mg(2+) serves as cofactor.

The protein resides in the cytoplasm. It carries out the reaction isopentenyl diphosphate = dimethylallyl diphosphate. Functionally, involved in the biosynthesis of isoprenoids. Catalyzes the 1,3-allylic rearrangement of the homoallylic substrate isopentenyl (IPP) to its allylic isomer, dimethylallyl diphosphate (DMAPP). In Streptococcus pneumoniae serotype 4 (strain ATCC BAA-334 / TIGR4), this protein is Isopentenyl-diphosphate delta-isomerase.